The primary structure comprises 1486 residues: Chromosome partition protein MukB (1486 aa).

34 to 41 (GGNGAGKS) serves as a coordination point for ATP. Coiled coils occupy residues 326–418 (LEAD…QYNQ), 444–480 (LETF…QAYQ), and 509–603 (RHLA…RAPV). A flexible hinge region spans residues 666–783 (PGGSEDQRLN…EVPLFGRAAR (118 aa)). Coiled coils occupy residues 835 to 923 (EAEI…AKLE), 977 to 1115 (EMLS…TAKA), and 1209 to 1266 (VEAI…QNVS).

Belongs to the SMC family. MukB subfamily. In terms of assembly, homodimerization via its hinge domain. Binds to DNA via its C-terminal region. Interacts, and probably forms a ternary complex, with MukE and MukF via its C-terminal region. The complex formation is stimulated by calcium or magnesium. Interacts with tubulin-related protein FtsZ.

The protein resides in the cytoplasm. Its subcellular location is the nucleoid. In terms of biological role, plays a central role in chromosome condensation, segregation and cell cycle progression. Functions as a homodimer, which is essential for chromosome partition. Involved in negative DNA supercoiling in vivo, and by this means organize and compact chromosomes. May achieve or facilitate chromosome segregation by condensation DNA from both sides of a centrally located replisome during cell division. The chain is Chromosome partition protein MukB from Escherichia coli (strain SMS-3-5 / SECEC).